We begin with the raw amino-acid sequence, 451 residues long: Proline--tRNA ligase (451 aa).

This sequence belongs to the class-II aminoacyl-tRNA synthetase family. ProS type 2 subfamily. In terms of assembly, homodimer.

Its subcellular location is the cytoplasm. The catalysed reaction is tRNA(Pro) + L-proline + ATP = L-prolyl-tRNA(Pro) + AMP + diphosphate. Functionally, catalyzes the attachment of proline to tRNA(Pro) in a two-step reaction: proline is first activated by ATP to form Pro-AMP and then transferred to the acceptor end of tRNA(Pro). The polypeptide is Proline--tRNA ligase (Ruegeria sp. (strain TM1040) (Silicibacter sp.)).